A 566-amino-acid chain; its full sequence is Proline--tRNA ligase (566 aa).

Belongs to the class-II aminoacyl-tRNA synthetase family. ProS type 1 subfamily. As to quaternary structure, homodimer.

The protein resides in the cytoplasm. The enzyme catalyses tRNA(Pro) + L-proline + ATP = L-prolyl-tRNA(Pro) + AMP + diphosphate. Functionally, catalyzes the attachment of proline to tRNA(Pro) in a two-step reaction: proline is first activated by ATP to form Pro-AMP and then transferred to the acceptor end of tRNA(Pro). As ProRS can inadvertently accommodate and process non-cognate amino acids such as alanine and cysteine, to avoid such errors it has two additional distinct editing activities against alanine. One activity is designated as 'pretransfer' editing and involves the tRNA(Pro)-independent hydrolysis of activated Ala-AMP. The other activity is designated 'posttransfer' editing and involves deacylation of mischarged Ala-tRNA(Pro). The misacylated Cys-tRNA(Pro) is not edited by ProRS. The chain is Proline--tRNA ligase from Shouchella clausii (strain KSM-K16) (Alkalihalobacillus clausii).